Consider the following 191-residue polypeptide: ATP-dependent Clp protease proteolytic subunit 1 (191 aa).

The active-site Nucleophile is the Ser-91. The active site involves His-116.

Belongs to the peptidase S14 family. As to quaternary structure, fourteen ClpP subunits assemble into 2 heptameric rings which stack back to back to give a disk-like structure with a central cavity, resembling the structure of eukaryotic proteasomes.

The protein resides in the cytoplasm. It catalyses the reaction Hydrolysis of proteins to small peptides in the presence of ATP and magnesium. alpha-casein is the usual test substrate. In the absence of ATP, only oligopeptides shorter than five residues are hydrolyzed (such as succinyl-Leu-Tyr-|-NHMec, and Leu-Tyr-Leu-|-Tyr-Trp, in which cleavage of the -Tyr-|-Leu- and -Tyr-|-Trp bonds also occurs).. Cleaves peptides in various proteins in a process that requires ATP hydrolysis. Has a chymotrypsin-like activity. Plays a major role in the degradation of misfolded proteins. The protein is ATP-dependent Clp protease proteolytic subunit 1 of Chlamydia pneumoniae (Chlamydophila pneumoniae).